A 515-amino-acid polypeptide reads, in one-letter code: Putative acetolactate synthase large subunit IlvX (515 aa).

Glu48 contacts thiamine diphosphate. Residues 249–269 (FAEG…AGAR) and 283–302 (DLVP…GAAD) each bind FAD. The interval 357-436 (TCGVLLPQAT…VTTVIYNNGA (80 aa)) is thiamine pyrophosphate binding. 2 residues coordinate Mg(2+): Asp407 and Asn434.

This sequence belongs to the TPP enzyme family. In terms of assembly, heterodimer of large catalytic subunit and small regulatory subunit. Requires Mg(2+) as cofactor. It depends on thiamine diphosphate as a cofactor.

The enzyme catalyses 2 pyruvate + H(+) = (2S)-2-acetolactate + CO2. It participates in amino-acid biosynthesis; L-isoleucine biosynthesis; L-isoleucine from 2-oxobutanoate: step 1/4. Its pathway is amino-acid biosynthesis; L-valine biosynthesis; L-valine from pyruvate: step 1/4. Functionally, catalyzes the conversion of 2 pyruvate molecules into acetolactate in the first common step of the biosynthetic pathway of the branched-amino acids such as leucine, isoleucine, and valine. The chain is Putative acetolactate synthase large subunit IlvX (ilvX) from Mycobacterium tuberculosis (strain ATCC 25618 / H37Rv).